Consider the following 179-residue polypeptide: NADH dehydrogenase [ubiquinone] 1 beta subcomplex subunit 9 (179 aa).

N-acetylalanine is present on Ala2. A Phosphoserine modification is found at Ser85. Residues 136–162 form a disordered region; that stretch reads EVKQLQEETPPGGPLTEALPPARKEGD.

It belongs to the complex I LYR family. Mammalian complex I is composed of 45 different subunits.

The protein resides in the mitochondrion inner membrane. Functionally, accessory subunit of the mitochondrial membrane respiratory chain NADH dehydrogenase (Complex I), that is believed to be not involved in catalysis. Complex I functions in the transfer of electrons from NADH to the respiratory chain. The immediate electron acceptor for the enzyme is believed to be ubiquinone. This is NADH dehydrogenase [ubiquinone] 1 beta subcomplex subunit 9 (NDUFB9) from Homo sapiens (Human).